A 207-amino-acid chain; its full sequence is Large ribosomal subunit protein bL25 (207 aa).

Belongs to the bacterial ribosomal protein bL25 family. CTC subfamily. Part of the 50S ribosomal subunit; part of the 5S rRNA/L5/L18/L25 subcomplex. Contacts the 5S rRNA. Binds to the 5S rRNA independently of L5 and L18.

Functionally, this is one of the proteins that binds to the 5S RNA in the ribosome where it forms part of the central protuberance. This is Large ribosomal subunit protein bL25 from Rhizorhabdus wittichii (strain DSM 6014 / CCUG 31198 / JCM 15750 / NBRC 105917 / EY 4224 / RW1) (Sphingomonas wittichii).